Consider the following 270-residue polypeptide: Proteasome subunit beta (270 aa).

Positions 1-47 (MSNRGRLGDAFLRPGSSSFLDFLSDHAPELLPGRSAAAGNAPLAPHA) are cleaved as a propeptide — removed in mature form; by autocatalysis. Residue T48 is the Nucleophile of the active site.

Belongs to the peptidase T1B family. As to quaternary structure, the 20S proteasome core is composed of 14 alpha and 14 beta subunits that assemble into four stacked heptameric rings, resulting in a barrel-shaped structure. The two inner rings, each composed of seven catalytic beta subunits, are sandwiched by two outer rings, each composed of seven alpha subunits. The catalytic chamber with the active sites is on the inside of the barrel. Has a gated structure, the ends of the cylinder being occluded by the N-termini of the alpha-subunits. Is capped by the proteasome-associated ATPase, ARC.

It localises to the cytoplasm. It catalyses the reaction Cleavage of peptide bonds with very broad specificity.. Its pathway is protein degradation; proteasomal Pup-dependent pathway. The formation of the proteasomal ATPase ARC-20S proteasome complex, likely via the docking of the C-termini of ARC into the intersubunit pockets in the alpha-rings, may trigger opening of the gate for substrate entry. Interconversion between the open-gate and close-gate conformations leads to a dynamic regulation of the 20S proteasome proteolysis activity. Functionally, component of the proteasome core, a large protease complex with broad specificity involved in protein degradation. In Xylanimonas cellulosilytica (strain DSM 15894 / JCM 12276 / CECT 5975 / KCTC 9989 / LMG 20990 / NBRC 107835 / XIL07), this protein is Proteasome subunit beta.